The chain runs to 137 residues: Large ribosomal subunit protein eL28 (137 aa).

The residue at position 2 (serine 2) is an N-acetylserine. Residues lysine 58 and lysine 65 each participate in a glycyl lysine isopeptide (Lys-Gly) (interchain with G-Cter in SUMO2) cross-link. At serine 115 the chain carries Phosphoserine.

It belongs to the eukaryotic ribosomal protein eL28 family. In terms of assembly, component of the large ribosomal subunit.

It localises to the cytoplasm. Functionally, component of the large ribosomal subunit. The ribosome is a large ribonucleoprotein complex responsible for the synthesis of proteins in the cell. The protein is Large ribosomal subunit protein eL28 (RPL28) of Bos taurus (Bovine).